The following is a 304-amino-acid chain: Acetylxylan esterase A (304 aa).

The signal sequence occupies residues 1-24 (MLLSTHLLFVITTLVTSLLHPIDG). Catalysis depends on Ser-148, which acts as the Charge relay system. N-linked (GlcNAc...) asparagine glycosylation occurs at Asn-190.

Belongs to the carbohydrate esterase 1 (CE1) family. AxeA subfamily. As to quaternary structure, monomer.

The protein localises to the secreted. The catalysed reaction is Deacetylation of xylans and xylo-oligosaccharides.. Its pathway is glycan degradation; xylan degradation. With respect to regulation, inactivated by di-isopropylfluorophosphate and phenylmethylsulfonylfluorid (PMSF), a specific inhibitor of serine esterases. Its function is as follows. Acetylxylan esterase involved in the hydrolysis of xylan, a major structural heterogeneous polysaccharide found in plant biomass representing the second most abundant polysaccharide in the biosphere, after cellulose. Degrades acetylated xylans by cleaving acetyl side groups from the hetero-xylan backbone. The chain is Acetylxylan esterase A (axeA) from Aspergillus awamori (Black koji mold).